A 268-amino-acid chain; its full sequence is Purine nucleoside phosphorylase (268 aa).

Residues Ser-36, His-68, 88–90 (RIH), and Ala-120 each bind phosphate. Residue Glu-189 coordinates a purine D-ribonucleoside. Ser-208 is a phosphate binding site. Residue Asn-231 coordinates a purine D-ribonucleoside.

It belongs to the PNP/MTAP phosphorylase family. In terms of assembly, homotrimer.

The catalysed reaction is a purine 2'-deoxy-D-ribonucleoside + phosphate = a purine nucleobase + 2-deoxy-alpha-D-ribose 1-phosphate. It functions in the pathway purine metabolism; purine nucleoside salvage. In terms of biological role, the purine nucleoside phosphorylases catalyze the phosphorolytic breakdown of the N-glycosidic bond in the beta-(deoxy)ribonucleoside molecules, with the formation of the corresponding free purine bases and pentose-1-phosphate. Cleaves guanosine, inosine, 2'-deoxyguanosine and 2'-deoxyinosine. The chain is Purine nucleoside phosphorylase (punA) from Mycobacterium bovis (strain ATCC BAA-935 / AF2122/97).